A 155-amino-acid polypeptide reads, in one-letter code: Ribosomal RNA large subunit methyltransferase H (155 aa).

Residues L73, G104, and 123-128 (LSALTL) contribute to the S-adenosyl-L-methionine site.

It belongs to the RNA methyltransferase RlmH family. Homodimer.

It is found in the cytoplasm. It carries out the reaction pseudouridine(1915) in 23S rRNA + S-adenosyl-L-methionine = N(3)-methylpseudouridine(1915) in 23S rRNA + S-adenosyl-L-homocysteine + H(+). Its function is as follows. Specifically methylates the pseudouridine at position 1915 (m3Psi1915) in 23S rRNA. The protein is Ribosomal RNA large subunit methyltransferase H of Chromohalobacter salexigens (strain ATCC BAA-138 / DSM 3043 / CIP 106854 / NCIMB 13768 / 1H11).